The sequence spans 220 residues: Endonuclease NucS (220 aa).

It belongs to the NucS endonuclease family.

It is found in the cytoplasm. Functionally, cleaves both 3' and 5' ssDNA extremities of branched DNA structures. The protein is Endonuclease NucS of Mycobacterium leprae (strain TN).